The following is a 293-amino-acid chain: Tyrosine recombinase XerD (293 aa).

One can recognise a Core-binding (CB) domain in the interval 1 to 83 (MHGLIADFIH…ALRKFYRFLL (83 aa)). One can recognise a Tyr recombinase domain in the interval 104–287 (HLPATLSGTE…SNQHLVAVYH (184 aa)). Active-site residues include R144, K168, H239, R242, and H265. Y274 serves as the catalytic O-(3'-phospho-DNA)-tyrosine intermediate.

Belongs to the 'phage' integrase family. XerD subfamily. As to quaternary structure, forms a cyclic heterotetrameric complex composed of two molecules of XerC and two molecules of XerD.

It is found in the cytoplasm. Site-specific tyrosine recombinase, which acts by catalyzing the cutting and rejoining of the recombining DNA molecules. The XerC-XerD complex is essential to convert dimers of the bacterial chromosome into monomers to permit their segregation at cell division. It also contributes to the segregational stability of plasmids. The sequence is that of Tyrosine recombinase XerD from Lacticaseibacillus casei (Lactobacillus casei).